The following is a 215-amino-acid chain: Flavin-dependent thymidylate synthase (215 aa).

Residues 1 to 215 (MDVRFISLTK…FPTVAAALEW (215 aa)) form the ThyX domain. FAD-binding positions include serine 56, 79-81 (RHR), and glutamate 87. DUMP is bound by residues 76-79 (QILR), 87-91 (EFSLR), and arginine 155. The short motif at 79-89 (RHRSFSFQEFS) is the ThyX motif element. Residue histidine 177 coordinates FAD. Arginine 182 lines the dUMP pocket. Arginine 182 acts as the Involved in ionization of N3 of dUMP, leading to its activation in catalysis.

Belongs to the thymidylate synthase ThyX family. Homotetramer. FAD serves as cofactor.

The enzyme catalyses dUMP + (6R)-5,10-methylene-5,6,7,8-tetrahydrofolate + NADPH + H(+) = dTMP + (6S)-5,6,7,8-tetrahydrofolate + NADP(+). The protein operates within pyrimidine metabolism; dTTP biosynthesis. Its function is as follows. Catalyzes the reductive methylation of 2'-deoxyuridine-5'-monophosphate (dUMP) to 2'-deoxythymidine-5'-monophosphate (dTMP) while utilizing 5,10-methylenetetrahydrofolate (mTHF) as the methyl donor, and NADPH and FADH(2) as the reductant. The polypeptide is Flavin-dependent thymidylate synthase (Synechocystis sp. (strain ATCC 27184 / PCC 6803 / Kazusa)).